The primary structure comprises 241 residues: Peroxisomal membrane protein 11C (241 aa).

Residues 1 to 124 lie on the Cytoplasmic side of the membrane; that stretch reads MASLSGLASA…ARVLHVDSSR (124 aa). Residues 125–149 traverse the membrane as a helical segment; it reads WWTLSTTLWALSLLLGVARSLWMLL. The Lumenal portion of the chain corresponds to 150-211; the sequence is KLRQRLRSPT…GVLWAGRFPP (62 aa). A helical transmembrane segment spans residues 212–227; sequence WLVGLMGTISSILSMY. The Cytoplasmic portion of the chain corresponds to 228–241; sequence QAARAGGQAEATTP.

The protein belongs to the peroxin-11 family. In terms of assembly, homodimer. Heterodimer with either PEX11A or PEX11B. Interacts with FIS1.

It is found in the peroxisome membrane. Its function is as follows. Promotes membrane protrusion and elongation on the peroxisomal surface. The protein is Peroxisomal membrane protein 11C (PEX11G) of Homo sapiens (Human).